A 485-amino-acid polypeptide reads, in one-letter code: Cobyric acid synthase (485 aa).

The GATase cobBQ-type domain occupies 252-439 (KVRIAVPILP…VHGLFGDDRQ (188 aa)). C334 acts as the Nucleophile in catalysis. The active site involves H431.

This sequence belongs to the CobB/CobQ family. CobQ subfamily.

The protein operates within cofactor biosynthesis; adenosylcobalamin biosynthesis. Catalyzes amidations at positions B, D, E, and G on adenosylcobyrinic A,C-diamide. NH(2) groups are provided by glutamine, and one molecule of ATP is hydrogenolyzed for each amidation. This Azorhizobium caulinodans (strain ATCC 43989 / DSM 5975 / JCM 20966 / LMG 6465 / NBRC 14845 / NCIMB 13405 / ORS 571) protein is Cobyric acid synthase.